The following is a 390-amino-acid chain: Protein DDI1 homolog (390 aa).

Residue D205 is part of the active site. A disordered region spans residues M322 to V344. Low complexity predominate over residues P330–P343.

The protein belongs to the DDI1 family.

Its subcellular location is the cytoplasm. With respect to regulation, inhibited by pepstatin, diazoacetyl-DL-norleucine methyl ester (DAN) and nelfinavir. Inhibited by the proteinase inhibitors lopinavir and ritonavir. Functionally, aspartic protease. The chain is Protein DDI1 homolog from Leishmania major.